The sequence spans 440 residues: Trigger factor (440 aa).

Positions 176-261 (GDKVVIDYQN…VKSIYVVKDV (86 aa)) constitute a PPIase FKBP-type domain.

Belongs to the FKBP-type PPIase family. Tig subfamily.

The protein resides in the cytoplasm. It carries out the reaction [protein]-peptidylproline (omega=180) = [protein]-peptidylproline (omega=0). Its function is as follows. Involved in protein export. Acts as a chaperone by maintaining the newly synthesized protein in an open conformation. Functions as a peptidyl-prolyl cis-trans isomerase. This Ehrlichia canis (strain Jake) protein is Trigger factor.